Reading from the N-terminus, the 213-residue chain is Ras-related protein Rab-25 (213 aa).

9 residues coordinate GTP: serine 21, glycine 24, lysine 25, threonine 26, asparagine 27, serine 38, histidine 39, threonine 43, and threonine 44. Threonine 26 is a Mg(2+) binding site. 2 short sequence motifs (switch) span residues 35 to 49 (NEFSHDSRTTIGVEF) and 67 to 84 (DTAGLERYRAITSAYYRG). 2 residues coordinate Mg(2+): threonine 44 and aspartate 67. Positions 70, 125, 126, 128, 156, and 157 each coordinate GTP. S-geranylgeranyl cysteine attachment occurs at residues cysteine 209 and cysteine 210. Cysteine 210 is subject to Cysteine methyl ester. Positions 211–213 (ISL) are cleaved as a propeptide — removed in mature form.

It belongs to the small GTPase superfamily. Rab family. In terms of assembly, interacts (GTP-bound form) with RAB11FIP1, RAB11FIP2, RAB11FIP3 and RAB11FIP4. Interacts (via the hypervariable C-terminal region) with ITGB1 (via the cytoplasmic region); the interaction is GTP-dependent. Interacts with ITGAV. Associates with the integrin alpha-V/beta-1 heterodimer. Interacts with VPS33B. Requires Mg(2+) as cofactor.

Its subcellular location is the cell membrane. The protein localises to the cell projection. It localises to the pseudopodium membrane. It is found in the cytoplasmic vesicle. It catalyses the reaction GTP + H2O = GDP + phosphate + H(+). With respect to regulation, regulated by guanine nucleotide exchange factors (GEFs) which promote the exchange of bound GDP for free GTP. Regulated by GTPase activating proteins (GAPs) which increase the GTP hydrolysis activity. Inhibited by GDP dissociation inhibitors (GDIs) which prevent Rab-GDP dissociation. The small GTPases Rab are key regulators of intracellular membrane trafficking, from the formation of transport vesicles to their fusion with membranes. Rabs cycle between an inactive GDP-bound form and an active GTP-bound form that is able to recruit to membranes different set of downstream effectors directly responsible for vesicle formation, movement, tethering and fusion. RAB25 regulates epithelial cell differentiation, proliferation and survival, thereby playing key roles in tumorigenesis. Promotes invasive migration of cells in which it functions to localize and maintain integrin alpha-V/beta-1 at the tips of extending pseudopodia. Involved in the regulation of epithelial morphogenesis through the control of CLDN4 expression and localization at tight junctions. May selectively regulate the apical recycling pathway. Together with MYO5B regulates transcytosis. This Bos taurus (Bovine) protein is Ras-related protein Rab-25 (RAB25).